A 151-amino-acid chain; its full sequence is Deoxyuridine 5'-triphosphate nucleotidohydrolase (151 aa).

Substrate-binding positions include 70–72 (RSG), N83, 87–89 (LID), and M97.

The protein belongs to the dUTPase family. Requires Mg(2+) as cofactor.

The enzyme catalyses dUTP + H2O = dUMP + diphosphate + H(+). It functions in the pathway pyrimidine metabolism; dUMP biosynthesis; dUMP from dCTP (dUTP route): step 2/2. Its function is as follows. This enzyme is involved in nucleotide metabolism: it produces dUMP, the immediate precursor of thymidine nucleotides and it decreases the intracellular concentration of dUTP so that uracil cannot be incorporated into DNA. The protein is Deoxyuridine 5'-triphosphate nucleotidohydrolase of Pseudomonas putida (strain W619).